A 244-amino-acid polypeptide reads, in one-letter code: 3-deoxy-manno-octulosonate cytidylyltransferase (244 aa).

It belongs to the KdsB family.

The protein localises to the cytoplasm. The catalysed reaction is 3-deoxy-alpha-D-manno-oct-2-ulosonate + CTP = CMP-3-deoxy-beta-D-manno-octulosonate + diphosphate. Its pathway is nucleotide-sugar biosynthesis; CMP-3-deoxy-D-manno-octulosonate biosynthesis; CMP-3-deoxy-D-manno-octulosonate from 3-deoxy-D-manno-octulosonate and CTP: step 1/1. It functions in the pathway bacterial outer membrane biogenesis; lipopolysaccharide biosynthesis. Activates KDO (a required 8-carbon sugar) for incorporation into bacterial lipopolysaccharide in Gram-negative bacteria. The sequence is that of 3-deoxy-manno-octulosonate cytidylyltransferase from Flavobacterium johnsoniae (strain ATCC 17061 / DSM 2064 / JCM 8514 / BCRC 14874 / CCUG 350202 / NBRC 14942 / NCIMB 11054 / UW101) (Cytophaga johnsonae).